A 473-amino-acid polypeptide reads, in one-letter code: Biotin-dependent acetyl-/propionyl-coenzyme A carboxylase beta6 subunit (473 aa).

The region spanning Met-1 to Glu-224 is the CoA carboxyltransferase N-terminal domain. A CoA carboxyltransferase C-terminal domain is found at Ala-225–Leu-473.

The protein belongs to the AccD/PCCB family. In terms of assembly, the biotin-dependent acyl-CoA carboxylase complex is composed of AccA3, which contains the biotin carboxylase (BC) and biotin carboxyl carrier protein (BCCP) domains, and AccD6, which contains the carboxyl transferase (CT) domain.

It carries out the reaction N(6)-carboxybiotinyl-L-lysyl-[protein] + acetyl-CoA = N(6)-biotinyl-L-lysyl-[protein] + malonyl-CoA. The catalysed reaction is N(6)-carboxybiotinyl-L-lysyl-[protein] + propanoyl-CoA = methylmalonyl-CoA + N(6)-biotinyl-L-lysyl-[protein]. It functions in the pathway lipid metabolism; fatty acid biosynthesis. The protein operates within lipid metabolism; mycolic acid biosynthesis. Its function is as follows. Component of a biotin-dependent acyl-CoA carboxylase complex. This subunit transfers the CO2 from carboxybiotin to the CoA ester substrate. When associated with the alpha3 subunit AccA3, is involved in the carboxylation of acetyl-CoA and propionyl-CoA. This Mycobacterium bovis (strain ATCC BAA-935 / AF2122/97) protein is Biotin-dependent acetyl-/propionyl-coenzyme A carboxylase beta6 subunit (accD6).